A 75-amino-acid chain; its full sequence is UPF0352 protein VV1166 (75 aa).

Belongs to the UPF0352 family.

In Vibrio vulnificus (strain YJ016), this protein is UPF0352 protein VV1166.